Consider the following 69-residue polypeptide: DNA gyrase inhibitor YacG (69 aa).

Positions 9, 12, 28, and 32 each coordinate Zn(2+). Positions 48 to 69 are disordered; it reads PVSPDAEDELFSGDLEAPHRGH.

This sequence belongs to the DNA gyrase inhibitor YacG family. Interacts with GyrB. Zn(2+) is required as a cofactor.

Functionally, inhibits all the catalytic activities of DNA gyrase by preventing its interaction with DNA. Acts by binding directly to the C-terminal domain of GyrB, which probably disrupts DNA binding by the gyrase. In Pseudomonas syringae pv. syringae (strain B728a), this protein is DNA gyrase inhibitor YacG.